Here is a 327-residue protein sequence, read N- to C-terminus: Germination protease (327 aa).

The propeptide occupies 1–7; that stretch reads MNSVRTD.

This sequence belongs to the peptidase A25 family. In terms of assembly, homotetramer. Post-translationally, autoproteolytically processed. The inactive tetrameric zymogen termed p46 autoprocesses to a smaller form termed p41, which is active only during spore germination.

It carries out the reaction Endopeptidase action with P4 Glu or Asp, P1 preferably Glu &gt; Asp, P1' hydrophobic and P2' Ala.. Functionally, initiates the rapid degradation of small, acid-soluble proteins during spore germination. The chain is Germination protease from Clostridium acetobutylicum (strain ATCC 824 / DSM 792 / JCM 1419 / IAM 19013 / LMG 5710 / NBRC 13948 / NRRL B-527 / VKM B-1787 / 2291 / W).